We begin with the raw amino-acid sequence, 374 residues long: Beta-1,3-N-acetylglucosaminyltransferase lunatic fringe (374 aa).

At 1–8 (MLKTYRGK) the chain is on the cytoplasmic side. Residues 9-29 (VVVSLAGATVTCLGFLLFLSQ) form a helical; Signal-anchor for type II membrane protein membrane-spanning segment. Residues 30–374 (HQRIQADGMQ…TPWCPPQVAY (345 aa)) lie on the Lumenal side of the membrane. N-linked (GlcNAc...) asparagine glycosylation occurs at Asn40. Positions 80-100 (RSRREADKPSEAPGAATDAPP) are disordered. Arg123 serves as a coordination point for substrate. N-linked (GlcNAc...) asparagine glycosylation occurs at Asn162. Disulfide bonds link Cys163-Cys174 and Cys192-Cys255. Residue Asp196 coordinates substrate. Asp197 is a Mn(2+) binding site. Residue Asp285 is part of the active site. His309 is a Mn(2+) binding site. Cys359 and Cys368 are oxidised to a cystine.

It belongs to the glycosyltransferase 31 family. The cofactor is Mn(2+). Co(2+) serves as cofactor. A soluble form may be derived from the membrane form by proteolytic processing. In terms of tissue distribution, in the embryo, expressed along the A-P axis of the neural tube, within the lateral plate mesoderm, in the presomitic mesoderm and the somites, in specific rhombomeres of the hindbrain (even-numbered rhombomeres) and in the otic vesicles.

It is found in the golgi apparatus membrane. The enzyme catalyses 3-O-(alpha-L-fucosyl)-L-threonyl-[EGF-like domain protein] + UDP-N-acetyl-alpha-D-glucosamine = 3-O-(N-acetyl-beta-D-glucosaminyl-(1-&gt;3)-alpha-L-fucosyl)-L-threonyl-[EGF-like domain protein] + UDP + H(+). The catalysed reaction is 3-O-(alpha-L-fucosyl)-L-seryl-[EGF-like domain protein] + UDP-N-acetyl-alpha-D-glucosamine = 3-O-(N-acetyl-beta-D-glucosaminyl-(1-&gt;3)-alpha-L-fucosyl)-L-seryl-[EGF-like domain protein] + UDP + H(+). In terms of biological role, glycosyltransferase that initiates the elongation of O-linked fucose residues attached to EGF-like repeats in the extracellular domain of Notch molecules. Involved in the correct formation of boundaries in the somites and hindbrain. Required for Delta-Notch-mediated induction of hypochord cells at the lateral borders of the midline precursor domain. In Danio rerio (Zebrafish), this protein is Beta-1,3-N-acetylglucosaminyltransferase lunatic fringe (lfng).